The following is a 135-amino-acid chain: Small ribosomal subunit protein uS11 (135 aa).

Belongs to the universal ribosomal protein uS11 family. As to quaternary structure, part of the 30S ribosomal subunit. Interacts with proteins S7 and S18. Binds to IF-3.

Located on the platform of the 30S subunit, it bridges several disparate RNA helices of the 16S rRNA. Forms part of the Shine-Dalgarno cleft in the 70S ribosome. In Corynebacterium urealyticum (strain ATCC 43042 / DSM 7109), this protein is Small ribosomal subunit protein uS11.